A 221-amino-acid polypeptide reads, in one-letter code: Serotriflin (221 aa).

In terms of domain architecture, SCP spans 19-147 (LDKHNALRRS…SYNYYYVCHY (129 aa)). Asn48 is a glycosylation site (N-linked (GlcNAc...) asparagine). 8 disulfides stabilise this stretch: Cys56–Cys134, Cys73–Cys148, Cys129–Cys145, Cys167–Cys174, Cys170–Cys179, Cys183–Cys216, Cys192–Cys210, and Cys201–Cys214. A ShKT domain is found at 183-216 (CKHVDRYSNCNSLVQQISCQSNNMNTDCPASCFC).

In terms of assembly, forms a stable, non-covalent complex with SSP-2.

It localises to the secreted. In Protobothrops flavoviridis (Habu), this protein is Serotriflin.